We begin with the raw amino-acid sequence, 694 residues long: Elongation factor G (694 aa).

One can recognise a tr-type G domain in the interval 9 to 288; that stretch reads DAIRNIGIMA…VIVKWLPSPL (280 aa). GTP is bound by residues 18 to 25, 82 to 86, and 136 to 139; these read AHIDAGKT, DTPGH, and NKMD.

It belongs to the TRAFAC class translation factor GTPase superfamily. Classic translation factor GTPase family. EF-G/EF-2 subfamily.

Its subcellular location is the cytoplasm. Functionally, catalyzes the GTP-dependent ribosomal translocation step during translation elongation. During this step, the ribosome changes from the pre-translocational (PRE) to the post-translocational (POST) state as the newly formed A-site-bound peptidyl-tRNA and P-site-bound deacylated tRNA move to the P and E sites, respectively. Catalyzes the coordinated movement of the two tRNA molecules, the mRNA and conformational changes in the ribosome. This Chlamydia trachomatis serovar A (strain ATCC VR-571B / DSM 19440 / HAR-13) protein is Elongation factor G.